We begin with the raw amino-acid sequence, 181 residues long: Acireductone dioxygenase (181 aa).

Residues His98, His100, Glu104, and His142 each coordinate Fe(2+). Ni(2+) is bound by residues His98, His100, Glu104, and His142.

The protein belongs to the acireductone dioxygenase (ARD) family. In terms of assembly, monomer. It depends on Fe(2+) as a cofactor. The cofactor is Ni(2+).

The catalysed reaction is 1,2-dihydroxy-5-(methylsulfanyl)pent-1-en-3-one + O2 = 3-(methylsulfanyl)propanoate + CO + formate + 2 H(+). It catalyses the reaction 1,2-dihydroxy-5-(methylsulfanyl)pent-1-en-3-one + O2 = 4-methylsulfanyl-2-oxobutanoate + formate + 2 H(+). It functions in the pathway amino-acid biosynthesis; L-methionine biosynthesis via salvage pathway; L-methionine from S-methyl-5-thio-alpha-D-ribose 1-phosphate: step 5/6. In terms of biological role, catalyzes 2 different reactions between oxygen and the acireductone 1,2-dihydroxy-3-keto-5-methylthiopentene (DHK-MTPene) depending upon the metal bound in the active site. Fe-containing acireductone dioxygenase (Fe-ARD) produces formate and 2-keto-4-methylthiobutyrate (KMTB), the alpha-ketoacid precursor of methionine in the methionine recycle pathway. Ni-containing acireductone dioxygenase (Ni-ARD) produces methylthiopropionate, carbon monoxide and formate, and does not lie on the methionine recycle pathway. In Synechococcus sp. (strain ATCC 27144 / PCC 6301 / SAUG 1402/1) (Anacystis nidulans), this protein is Acireductone dioxygenase.